The chain runs to 281 residues: 4-diphosphocytidyl-2-C-methyl-D-erythritol kinase (281 aa).

Residue K15 is part of the active site. 98–108 (PTGAGLGGGSS) is an ATP binding site. D140 is a catalytic residue.

This sequence belongs to the GHMP kinase family. IspE subfamily.

It catalyses the reaction 4-CDP-2-C-methyl-D-erythritol + ATP = 4-CDP-2-C-methyl-D-erythritol 2-phosphate + ADP + H(+). Its pathway is isoprenoid biosynthesis; isopentenyl diphosphate biosynthesis via DXP pathway; isopentenyl diphosphate from 1-deoxy-D-xylulose 5-phosphate: step 3/6. Functionally, catalyzes the phosphorylation of the position 2 hydroxy group of 4-diphosphocytidyl-2C-methyl-D-erythritol. In Neisseria gonorrhoeae (strain NCCP11945), this protein is 4-diphosphocytidyl-2-C-methyl-D-erythritol kinase.